Here is a 289-residue protein sequence, read N- to C-terminus: Probable acetolactate synthase small subunit (289 aa).

Serine 34 is modified (phosphoserine). The 78-residue stretch at 72 to 149 (VFNCLVQNEP…AVLDYTGTSM (78 aa)) folds into the ACT domain.

It belongs to the acetolactate synthase small subunit family.

It is found in the cytoplasm. Its pathway is amino-acid biosynthesis; L-isoleucine biosynthesis; L-isoleucine from 2-oxobutanoate: step 1/4. It functions in the pathway amino-acid biosynthesis; L-valine biosynthesis; L-valine from pyruvate: step 1/4. Functionally, stimulates activity of the acetolactate synthase catalytic subunit ilv1. This chain is Probable acetolactate synthase small subunit, found in Schizosaccharomyces pombe (strain 972 / ATCC 24843) (Fission yeast).